Here is a 653-residue protein sequence, read N- to C-terminus: PAN2-PAN3 deadenylation complex subunit PAN3 (653 aa).

2 disordered regions span residues 1 to 21 and 45 to 128; these read MASD…ENAK and HDPN…AAPD. A C3H1-type zinc finger spans residues 19 to 48; it reads NAKDTLCRNVTIYGRCRYEDKGCVYNHDPN. Residues 68 to 95 are compositionally biased toward low complexity; it reads SFTPSLLSSNGSSPTSSSATLKKTTTIS. Over residues 108 to 119 the composition is skewed to polar residues; it reads GISSRSNASTPS. A pseudokinase domain region spans residues 256–516; the sequence is QTLPNTQLPA…TIDIFITGIS (261 aa). Residues Arg308, 357 to 364, and 416 to 417 contribute to the ATP site; these read DYHPLSKT and SK. A coiled-coil region spans residues 517-555; sequence SQLMSTFDSALHMDDQLTSDLSRELENGRLVRLMTKLNF. The interval 556 to 653 is knob domain; that stretch reads INERPEYEHD…ALLKPTRRVH (98 aa).

This sequence belongs to the protein kinase superfamily. PAN3 family. Homodimer. Forms a heterotrimer with a catalytic subunit pan2 to form the poly(A)-nuclease (PAN) deadenylation complex. Interacts (via PAM-2 motif) with poly(A)-binding protein pab1 (via PABC domain), conferring substrate specificity of the enzyme complex.

Its subcellular location is the cytoplasm. Functionally, regulatory subunit of the poly(A)-nuclease (PAN) deadenylation complex, one of two cytoplasmic mRNA deadenylases involved in mRNA turnover. PAN specifically shortens poly(A) tails of RNA and the activity is stimulated by poly(A)-binding protein pab1. PAN deadenylation is followed by rapid degradation of the shortened mRNA tails by the CCR4-NOT complex. Deadenylated mRNAs are then degraded by two alternative mechanisms, namely exosome-mediated 3'-5' exonucleolytic degradation, or deadenylation-dependent mRNA decaping and subsequent 5'-3' exonucleolytic degradation by xrn1. May also be involved in post-transcriptional maturation of mRNA poly(A) tails. pan3 acts as a positive regulator for PAN activity, recruiting the catalytic subunit pan2 to mRNA via its interaction with RNA and with pab1. The polypeptide is PAN2-PAN3 deadenylation complex subunit PAN3 (Aspergillus terreus (strain NIH 2624 / FGSC A1156)).